Consider the following 241-residue polypeptide: MLKIQKLSIAALMVSAVISGQVFAEDNTFDEKAASYAVGTLMGSQMKDLVDSHKEVIKYDNARILDGLKDALEGKVDVRKDEKIQKTLESIEAKLVAASKAKAESIAKQAKEEGDKFRAEFAKGKDVKTTQSGLMYKIESAGKGDTIKSTDTVKVHYTGKLPNGKVFDSSVERGQPVEFQLDQVIKGWTEGLQLVKKGGKIQFVIAPELGYGEQGAGASIPPNSTLIFDVEVLDVNPKSEK.

Residues 150-241 (TDTVKVHYTG…VLDVNPKSEK (92 aa)) enclose the PPIase FKBP-type domain.

This sequence belongs to the FKBP-type PPIase family.

The enzyme catalyses [protein]-peptidylproline (omega=180) = [protein]-peptidylproline (omega=0). In terms of biological role, PPIases accelerate the folding of proteins. It catalyzes the cis-trans isomerization of proline imidic peptide bonds in oligopeptides. The polypeptide is Probable FKBP-type peptidyl-prolyl cis-trans isomerase (Haemophilus influenzae (strain ATCC 51907 / DSM 11121 / KW20 / Rd)).